The primary structure comprises 303 residues: MDAKIKRAEGRLREDPYEGHQMLRTLVNRQVKAKKHDDAVALLYSGAKTLFEIEQTGSAADLAIYMLDVYEKASYAASLDNKARALTLLGLFPAEEGARKQYVKRLLEWSKSAGPQGDKDVHFAVATMFVKWKEPASAEKHFVLGNEKSARAYGETMYYWFTSDSSISPDTFAGRPVLNYLLAENLISAWNSLETFTKHFTKSNAPDVENMSFDGKDFPVFKEYPQMNFLHLLIFTAYRKDKETYLSLVQKYPKKQDWEAALAKIEEIYFGIRPVSNQPNILANLMSSLFSGPPAATNQLDLE.

It belongs to the GET4 family.

The protein localises to the cytoplasm. Its function is as follows. May play a role in insertion of tail-anchored proteins into the endoplasmic reticulum membrane. This is Golgi to ER traffic protein 4 (get4) from Schizosaccharomyces pombe (strain 972 / ATCC 24843) (Fission yeast).